The primary structure comprises 327 residues: Sideroflexin-2 (327 aa).

5 consecutive transmembrane segments (helical) span residues 99–119, 143–163, 175–195, 228–248, and 267–287; these read GMLI…VVLW, VTQL…AAIG, LFQR…NIPL, EVVV…PLIM, and FQTL…CALF.

The protein belongs to the sideroflexin family.

It is found in the mitochondrion membrane. It catalyses the reaction L-serine(in) = L-serine(out). In terms of biological role, mitochondrial amino-acid transporter that mediates transport of serine into mitochondria. The chain is Sideroflexin-2 from Drosophila melanogaster (Fruit fly).